The sequence spans 276 residues: Cerberus (276 aa).

The signal sequence occupies residues methionine 1–glycine 20. Residues asparagine 103, asparagine 118, and asparagine 160 are each glycosylated (N-linked (GlcNAc...) asparagine). Cystine bridges form between cysteine 175-cysteine 221, cysteine 189-cysteine 235, cysteine 199-cysteine 251, and cysteine 203-cysteine 253. One can recognise a CTCK domain in the interval cysteine 175–asparagine 259. N-linked (GlcNAc...) asparagine glycosylation occurs at asparagine 234.

Belongs to the DAN family. As to quaternary structure, the long chain interacts with nodal/nr-1, bmp4 and wnt8, thereby inhibiting their function. The short chain interacts with nodal/nr-1 but not bmp4 or wnt8. In terms of tissue distribution, expressed in the anterior endomesoderm of the early gastrula with expression expanded laterally around the margin at the endoderm/mesoderm boundary.

It localises to the secreted. Inhibits wnt, nodal/nr-1 and bmp signaling in the embryo to promote head formation and anterior neural induction. Within the endoderm, acts as an essential mediator of nodal/nr-1-induced cardiogenesis in the overlying mesoderm. In Xenopus tropicalis (Western clawed frog), this protein is Cerberus.